A 185-amino-acid polypeptide reads, in one-letter code: Calcium-binding protein CML37 (185 aa).

Polar residues predominate over residues 1 to 12 (MTLAKNQKSSLS). Residues 1–45 (MTLAKNQKSSLSRLYKKVSSKRSESSRNLEDESRTSSNSSGSSSL) are disordered. Residues 21–34 (KRSESSRNLEDESR) are compositionally biased toward basic and acidic residues. Residues 35–44 (TSSNSSGSSS) show a composition bias toward low complexity. EF-hand domains lie at 45 to 80 (LNVN…LGGA), 81 to 116 (LSSR…EDGS), 119 to 154 (ERRK…LGES), and 155 to 185 (CTVD…LMMR). Positions 58, 60, 62, 64, 69, 94, 96, 98, and 105 each coordinate Ca(2+). Ca(2+) contacts are provided by D168, N170, D172, and E179.

As to quaternary structure, binds to ABCG36. Expressed in cotyledons, stipule, young leaves and at the hypocotyl-root junction. In mature root, expressed in the stele, cortex, emerging lateral root, root tip and root cap. In mature plant, expressed at the base of cauline and floral branches, and in rosette and cauline leaves. Expressed from stage 9 to 14 of flower development in anthers. At stage 15, expressed in carpel, sepals, petals and pollen until dehiscence. Expressed in developing seeds and young siliques.

In terms of biological role, potential calcium sensor that binds calcium in vitro. In Arabidopsis thaliana (Mouse-ear cress), this protein is Calcium-binding protein CML37.